Consider the following 809-residue polypeptide: Ribosome biogenesis protein ERB1 (809 aa).

The interval 1 to 107 (MSKSSKVGMT…SDTRSITDAI (107 aa)) is disordered. Acidic residues-rich tracts occupy residues 30-70 (AEVD…EDSD) and 77-97 (LGEE…EPQE). The interval 267–383 (RFVPSKHEAK…LRKVPGYQES (117 aa)) is required for interaction with NOP7. The interval 383–419 (SVRERFERCLDLYLAPRVRHNKLNIDPESLIPELPSP) is required for interaction with YTM1. 2 WD repeats span residues 435 to 474 (GHTD…QVFN) and 483 to 523 (NDED…FDIE). The disordered stretch occupies residues 545–569 (EEKFKNDEGNEDEDDEDDSATSTAV). Positions 553 to 563 (GNEDEDDEDDS) are enriched in acidic residues. WD repeat units follow at residues 593–635 (QCRK…SQSP), 638–676 (KSKG…LVKK), 679–718 (PGVR…TPYK), 722–762 (YHEK…DLMT), and 778–809 (VNSI…LWTT).

The protein belongs to the WD repeat BOP1/ERB1 family. As to quaternary structure, component of the NOP7 complex, composed of ERB1, NOP7 and YTM1. The complex is held together by ERB1, which interacts with NOP7 via its N-terminal domain and with YTM1 via a high-affinity interaction between the seven-bladed beta-propeller domains of the 2 proteins. The NOP7 complex associates with the 66S pre-ribosome.

It is found in the nucleus. The protein localises to the nucleolus. It localises to the nucleoplasm. Component of the NOP7 complex, which is required for maturation of the 25S and 5.8S ribosomal RNAs and formation of the 60S ribosome. The polypeptide is Ribosome biogenesis protein ERB1 (Scheffersomyces stipitis (strain ATCC 58785 / CBS 6054 / NBRC 10063 / NRRL Y-11545) (Yeast)).